A 510-amino-acid chain; its full sequence is Ribonuclease Y (510 aa).

A helical transmembrane segment spans residues 1–21 (MLIYILSGLGVLVGALLGYVV). One can recognise a KH domain in the interval 200–260 (TVSTIMLPND…LRREIAKRTI (61 aa)). One can recognise an HD domain in the interval 326–419 (VLNHSIEVAL…VAAADALSAA (94 aa)).

The protein belongs to the RNase Y family.

Its subcellular location is the cell membrane. Functionally, endoribonuclease that initiates mRNA decay. The polypeptide is Ribonuclease Y (Thermosipho melanesiensis (strain DSM 12029 / CIP 104789 / BI429)).